Consider the following 273-residue polypeptide: Aspartate/glutamate leucyltransferase (273 aa).

Belongs to the R-transferase family. Bpt subfamily.

The protein localises to the cytoplasm. It catalyses the reaction N-terminal L-glutamyl-[protein] + L-leucyl-tRNA(Leu) = N-terminal L-leucyl-L-glutamyl-[protein] + tRNA(Leu) + H(+). The catalysed reaction is N-terminal L-aspartyl-[protein] + L-leucyl-tRNA(Leu) = N-terminal L-leucyl-L-aspartyl-[protein] + tRNA(Leu) + H(+). Functions in the N-end rule pathway of protein degradation where it conjugates Leu from its aminoacyl-tRNA to the N-termini of proteins containing an N-terminal aspartate or glutamate. The sequence is that of Aspartate/glutamate leucyltransferase from Ruegeria pomeroyi (strain ATCC 700808 / DSM 15171 / DSS-3) (Silicibacter pomeroyi).